The sequence spans 586 residues: Madf and zinc finger protein 1 (586 aa).

An involved in interaction with Cp190 region spans residues 161-194 (FMSEDDLAPPRKPGRPPRRTRPGQVFKFKVSFIR). The MADF 1 DNA-binding region spans 201–292 (HLIQAYKEHP…KCEFLSVAPV (92 aa)). Residues 294-319 (TPRENEEDNDLTAIKLNFKEENLITT) form an involved in interaction with Cp190 region. Positions 320 to 413 (SFIETYANYP…MCSFLPAKGS (94 aa)) form a DNA-binding region, MADF 2. C2H2-type zinc fingers lie at residues 418 to 441 (LYCD…VKAH), 448 to 471 (YLCS…LRSH), 476 to 498 (LKCQ…TLIH), 504 to 527 (HVCD…NGVH), 533 to 555 (YSCN…IKGH), and 561 to 583 (KKCE…RRSH).

Interacts (via regions flanking MADF domain 1) with Cp190 (via regions between the BTB domain and first zinc finger domain); the interaction is probably direct and is essential for protein function.

It localises to the nucleus. Its subcellular location is the chromosome. The protein resides in the nucleoplasm. Chromatin-binding protein involved in the organization of active promoters and insulators. Essential for the activity of heterochromatin promoters; primarily binds to specific motifs within promoters of housekeeping genes. May also associate to a lesser extent with promoters in euchromatin. Mediates recruitment of Cp190, a multifunctional protein involved in the recruitment of transcription complexes, the creation of open chromatin regions and the activity of insulators. Cooperates with pita and su(Hw) to recruit Cp190 and regulate insulator function at the front-ultraabdominal (Fub) boundary. May cooperate with other C2H2 zinc finger proteins, such as M1BP, to recruit CP190 to promoters. May be involved in cellular organization and development of the eye. The chain is Madf and zinc finger protein 1 from Drosophila melanogaster (Fruit fly).